The following is a 361-amino-acid chain: D-amino-acid oxidase (361 aa).

An N-terminal signal peptide occupies residues 1–22 (MSNTIVVVGAGVIGLTSALLLS). The FAD site is built by A10, I13, K34, H35, A45, S46, G50, and N52. N193 and N222 each carry an N-linked (GlcNAc...) asparagine glycan. Residues Y242, Y258, and R305 each contribute to the (R)-lactate site. The anthranilate site is built by Y242, Y258, and R305. FAD-binding residues include R305, S332, G335, Y336, and Q337. A Microbody targeting signal motif is present at residues 359–361 (SKL).

The protein belongs to the DAMOX/DASOX family. It depends on FAD as a cofactor. Post-translationally, the N-terminus is blocked.

It localises to the peroxisome matrix. The catalysed reaction is a D-alpha-amino acid + O2 + H2O = a 2-oxocarboxylate + H2O2 + NH4(+). Catalyzes the oxidative deamination of D-amino acids with broad substrate specificity. Enables the organism to utilize D-amino acids as a source of nutrients. This is D-amino-acid oxidase from Fusarium vanettenii (Neocosmospora pisi).